The primary structure comprises 169 residues: Ribosome maturation factor RimP (169 aa).

It belongs to the RimP family.

The protein resides in the cytoplasm. Functionally, required for maturation of 30S ribosomal subunits. In Coprothermobacter proteolyticus (strain ATCC 35245 / DSM 5265 / OCM 4 / BT), this protein is Ribosome maturation factor RimP.